The chain runs to 350 residues: Membrane progestin receptor alpha (350 aa).

Residues 1-80 are Cytoplasmic-facing; that stretch reads MATMVAQKLS…HNEAVNVWTH (80 aa). Residues 81-101 traverse the membrane as a helical segment; it reads LLAALVLLLRLAIFVGTVDFW. The Extracellular segment spans residues 102 to 105; sequence GDPH. The chain crosses the membrane as a helical span at residues 106-126; sequence ALPLFIIVLASFTYLSLSALA. The Cytoplasmic segment spans residues 127-139; that stretch reads HLLQAKSEFWHYS. A helical transmembrane segment spans residues 140–160; the sequence is FFFLDYVGVAVYQFGSALAHF. Topologically, residues 161 to 165 are extracellular; it reads YYAIE. A helical membrane pass occupies residues 166 to 186; the sequence is PAWHAQVQTIFLPMAAFLAWL. Topologically, residues 187–239 are cytoplasmic; that stretch reads SCTGSCYNKYIQKPGLLGRTCQEVPSALAYALDISPVAHRILASPEPATDDPA. The helical transmembrane segment at 240–260 threads the bilayer; it reads LLYHKCQVVFFLLAAAFFSAF. Topologically, residues 261-278 are extracellular; sequence MPERWFPGSCHIFGQGHQ. Residues 279–299 form a helical membrane-spanning segment; sequence LFHVFLVLCTLAQLEAVALDY. Over 300–318 the chain is Cytoplasmic; it reads EARRPIYEPLHTRWPHNFS. A helical transmembrane segment spans residues 319-339; that stretch reads GLFLLTVGSSILTAFLLSQLV. The Extracellular portion of the chain corresponds to 340–350; that stretch reads RRKLDLDRKTQ.

This sequence belongs to the ADIPOR family.

It localises to the cell membrane. In terms of biological role, plasma membrane progesterone (P4) receptor coupled to G proteins. Seems to act through a G(i) mediated pathway. May be involved in oocyte maturation. Involved in neurosteroid inhibition of apoptosis. Also binds dehydroepiandrosterone (DHEA), pregnanolone, pregnenolone and allopregnanolone. In Sus scrofa (Pig), this protein is Membrane progestin receptor alpha (PAQR7).